A 487-amino-acid polypeptide reads, in one-letter code: Cysteine--tRNA ligase (487 aa).

Cysteine 29 lines the Zn(2+) pocket. The 'HIGH' region motif lies at 31–41; the sequence is VTVYDVNHVGH. Cysteine 209, histidine 234, and glutamate 238 together coordinate Zn(2+). The short motif at 266-270 is the 'KMSKS' region element; it reads KMSKS. Residue lysine 269 coordinates ATP.

The protein belongs to the class-I aminoacyl-tRNA synthetase family. Monomer. The cofactor is Zn(2+).

It localises to the cytoplasm. It carries out the reaction tRNA(Cys) + L-cysteine + ATP = L-cysteinyl-tRNA(Cys) + AMP + diphosphate. The protein is Cysteine--tRNA ligase of Persephonella marina (strain DSM 14350 / EX-H1).